Consider the following 231-residue polypeptide: Large ribosomal subunit protein uL1 (231 aa).

Belongs to the universal ribosomal protein uL1 family. Part of the 50S ribosomal subunit.

Binds directly to 23S rRNA. The L1 stalk is quite mobile in the ribosome, and is involved in E site tRNA release. Its function is as follows. Protein L1 is also a translational repressor protein, it controls the translation of the L11 operon by binding to its mRNA. The protein is Large ribosomal subunit protein uL1 of Francisella tularensis subsp. tularensis (strain FSC 198).